A 464-amino-acid chain; its full sequence is Glutamate--tRNA ligase (464 aa).

Residues 9–19 (PSPTGYLHIGG) carry the 'HIGH' region motif. The short motif at 242-246 (KISKR) is the 'KMSKS' region element. Lys-245 provides a ligand contact to ATP.

Belongs to the class-I aminoacyl-tRNA synthetase family. Glutamate--tRNA ligase type 1 subfamily. Monomer.

It localises to the cytoplasm. It catalyses the reaction tRNA(Glu) + L-glutamate + ATP = L-glutamyl-tRNA(Glu) + AMP + diphosphate. Its function is as follows. Catalyzes the attachment of glutamate to tRNA(Glu) in a two-step reaction: glutamate is first activated by ATP to form Glu-AMP and then transferred to the acceptor end of tRNA(Glu). The protein is Glutamate--tRNA ligase of Neisseria gonorrhoeae (strain ATCC 700825 / FA 1090).